A 93-amino-acid polypeptide reads, in one-letter code: Large ribosomal subunit protein bL31B (93 aa).

It belongs to the bacterial ribosomal protein bL31 family. Type B subfamily. Part of the 50S ribosomal subunit.

The protein is Large ribosomal subunit protein bL31B of Pseudomonas syringae pv. syringae (strain B728a).